We begin with the raw amino-acid sequence, 203 residues long: A-type ATP synthase subunit E (203 aa).

This sequence belongs to the V-ATPase E subunit family. As to quaternary structure, has multiple subunits with at least A(3), B(3), C, D, E, F, H, I and proteolipid K(x).

It localises to the cell membrane. Its function is as follows. Component of the A-type ATP synthase that produces ATP from ADP in the presence of a proton gradient across the membrane. The protein is A-type ATP synthase subunit E of Methanococcus maripaludis (strain DSM 14266 / JCM 13030 / NBRC 101832 / S2 / LL).